Consider the following 1009-residue polypeptide: Translation initiation factor IF-2 (1009 aa).

Positions 1–415 are disordered; the sequence is MSDENENGRP…EREKEKRRGG (415 aa). Over residues 94-110 the composition is skewed to basic and acidic residues; that stretch reads EELRARQRVVDAAREAQ. A compositionally biased stretch (low complexity) spans 111–121; that stretch reads ARQVAEQAAAE. A compositionally biased stretch (basic and acidic residues) spans 122 to 136; the sequence is ARARAAQEAAQREAA. Low complexity predominate over residues 137–146; that stretch reads AKAAAERAAA. The span at 147–174 shows a compositional bias: pro residues; sequence APPPVAQAPAAPAPAAPVTPPPAAPQAP. Low complexity predominate over residues 175 to 189; sequence RPVAQAPVAPSAPRQ. 2 stretches are compositionally biased toward basic and acidic residues: residues 208 to 218 and 251 to 287; these read EPSRDRRDDRP and PRPE…RPQG. The segment covering 311-320 has biased composition (pro residues); sequence GGPPRGPRPG. Basic and acidic residues-rich tracts occupy residues 346–358 and 403–415; these read MDRR…DRRK and RARE…RRGG. The 171-residue stretch at 505–675 folds into the tr-type G domain; sequence LRPPVVTIMG…LLQAEVLDLK (171 aa). Residues 514–521 form a G1 region; the sequence is GHVDHGKT. Residue 514-521 coordinates GTP; that stretch reads GHVDHGKT. A G2 region spans residues 539 to 543; it reads GITQH. The G3 stretch occupies residues 561–564; it reads DTPG. Residues 561 to 565 and 615 to 618 contribute to the GTP site; these read DTPGH and NKMD. Residues 615-618 form a G4 region; it reads NKMD. Residues 651–653 form a G5 region; sequence SAK.

The protein belongs to the TRAFAC class translation factor GTPase superfamily. Classic translation factor GTPase family. IF-2 subfamily.

It localises to the cytoplasm. In terms of biological role, one of the essential components for the initiation of protein synthesis. Protects formylmethionyl-tRNA from spontaneous hydrolysis and promotes its binding to the 30S ribosomal subunits. Also involved in the hydrolysis of GTP during the formation of the 70S ribosomal complex. This chain is Translation initiation factor IF-2, found in Caulobacter vibrioides (strain ATCC 19089 / CIP 103742 / CB 15) (Caulobacter crescentus).